The primary structure comprises 798 residues: Cadherin-20 (798 aa).

The first 35 residues, 1 to 35 (MWTSGRMSNAKNLFGLGVSLYFWGLMDLTTTVLSG), serve as a signal peptide directing secretion. The propeptide occupies 36–58 (SARPLTEGPEDNLSDKLHQRMKR). Asn47 is a glycosylation site (N-linked (GlcNAc...) asparagine). The Extracellular portion of the chain corresponds to 59 to 618 (SWVWNQFFVL…AYVLPVSLSR (560 aa)). 5 Cadherin domains span residues 60 to 164 (WVWN…EPKF), 165 to 273 (LDGP…PPRF), 274 to 392 (PQKH…EPSF), 389 to 493 (EPSF…APEF), and 493 to 615 (FARF…LPVS). The short motif at 88–90 (RGD) is the Cell attachment site element. Asn260 carries N-linked (GlcNAc...) asparagine glycosylation. N-linked (GlcNAc...) asparagine glycans are attached at residues Asn419, Asn460, and Asn541. The chain crosses the membrane as a helical span at residues 619-639 (GALIAILACIFVLLVLVLLIL). The Cytoplasmic portion of the chain corresponds to 640–798 (SMRRQRKQPY…GATDSSGALW (159 aa)).

Detected in embryonic spinal cord, in the brachial and lumbar section of motor neurons (at protein level). Detected in ventro-lateral portion of embryonic spinal cord, in the brachial and lumbar section of embryonic motor neurons. Detected in embryonic adductor motor neurons and embryonic dorsal root ganglion. Detected in the caudal half of newly generated somites and in presomitic mesoderm.

The protein resides in the cell membrane. Its function is as follows. Cadherins are calcium-dependent cell adhesion proteins. They preferentially interact with themselves in a homophilic manner in connecting cells; cadherins may thus contribute to the sorting of heterogeneous cell types. This is Cadherin-20 (CDH20) from Gallus gallus (Chicken).